A 510-amino-acid polypeptide reads, in one-letter code: UDP-N-acetylmuramyl-tripeptide synthetase (510 aa).

Residue Ser-36 coordinates UDP-N-acetyl-alpha-D-muramoyl-L-alanyl-D-glutamate. Residue 113 to 119 (GTKGKTT) coordinates ATP. Residues 159–160 (TT), Ser-186, and Arg-194 each bind UDP-N-acetyl-alpha-D-muramoyl-L-alanyl-D-glutamate. An N6-carboxylysine modification is found at Lys-228.

It belongs to the MurCDEF family. MurE subfamily. In terms of processing, carboxylation is probably crucial for Mg(2+) binding and, consequently, for the gamma-phosphate positioning of ATP.

It is found in the cytoplasm. It participates in cell wall biogenesis; peptidoglycan biosynthesis. In terms of biological role, catalyzes the addition of an amino acid to the nucleotide precursor UDP-N-acetylmuramoyl-L-alanyl-D-glutamate (UMAG) in the biosynthesis of bacterial cell-wall peptidoglycan. In Ligilactobacillus salivarius (strain UCC118) (Lactobacillus salivarius), this protein is UDP-N-acetylmuramyl-tripeptide synthetase.